Reading from the N-terminus, the 698-residue chain is MGKTERKKELLELFEYEKIKGDVSYSSIMKKAGGNGKGFLDRYFALHRNYILYYKLGKSSLKPDDKQEPQGYINLMDCNPDDTKEIAPLMFQISHKHRTYIVKAKDESSMKQFLTLLIARIRSLEKIDIDKLGCTVVVLTKVKKFREVLTNPLILPDRVSPEMAEEWVKQMKNYNASFNLADPFIKQVEQISEFCRGEVKEYIDWFGGPEGPRLAMIRCEETVLSNWVEYINKTSSEITTYQDNRFFREDFKDIAVHLKNMTTFIDCYNDYMIHCRKYNNNKPNTKFLEEKQTFKEYIEKFIPKVASCNDVSLNQFYDRSLIQSSDGIVTINTSGIKKTLINQSNIISITSTTTTTTTTTTTTCSMPNMSNLIHSLDHTNLNIIDLNHSKSQQQLHPPPSPHHQHLHHQIVSNSKDFNISVSSNNFNDGNSEFPNLDINCDFDLTSASNLSSPILSSEVPSNVVDPIGSGQGGGGSGGGGVTAVTEEAINEKWHFDCNTSMIFKPPSEDGRNEGSNMSTSSITSKMSLSLNGGFDMKWVYQCGYFKSKNMGSISWNGKHWCWSHPRTSYKIKYIWDPTKQSFLNIPFKSRVGATGGGSVPSSQSTNNLQSSTSSMSSLSSSSTSTTKRSHPTTLYPDYQFKDNLLTPIIIEGRHQPSLTLIDSPLTIPNACLLTIAMTQYIQDALIHLSLGPKVLSSK.

Residues 22–122 (DVSYSSIMKK…FLTLLIARIR (101 aa)) form the PH domain. Positions 594–630 (TGGGSVPSSQSTNNLQSSTSSMSSLSSSSTSTTKRSH) are disordered. Residues 601 to 626 (SSQSTNNLQSSTSSMSSLSSSSTSTT) show a composition bias toward low complexity.

It localises to the cytoplasm. In terms of biological role, couples activated G protein to adenylyl cyclase signal transduction from surface cAMP receptor. Pianissimo a cytosolic regulator and CRAC, are both essential for activation of the enzyme adenylyl cyclase. Pianissimo and CRAC do not function redundantly. Both proteins are integral components of the adenylyl cyclase activation pathway. This Dictyostelium discoideum (Social amoeba) protein is Protein CRAC (dagA).